The following is a 393-amino-acid chain: NAD(P)H-quinone oxidoreductase subunit H, chloroplastic (393 aa).

It belongs to the complex I 49 kDa subunit family. NDH is composed of at least 16 different subunits, 5 of which are encoded in the nucleus.

It localises to the plastid. Its subcellular location is the chloroplast thylakoid membrane. It catalyses the reaction a plastoquinone + NADH + (n+1) H(+)(in) = a plastoquinol + NAD(+) + n H(+)(out). The catalysed reaction is a plastoquinone + NADPH + (n+1) H(+)(in) = a plastoquinol + NADP(+) + n H(+)(out). NDH shuttles electrons from NAD(P)H:plastoquinone, via FMN and iron-sulfur (Fe-S) centers, to quinones in the photosynthetic chain and possibly in a chloroplast respiratory chain. The immediate electron acceptor for the enzyme in this species is believed to be plastoquinone. Couples the redox reaction to proton translocation, and thus conserves the redox energy in a proton gradient. The sequence is that of NAD(P)H-quinone oxidoreductase subunit H, chloroplastic from Solanum tuberosum (Potato).